The sequence spans 263 residues: 2-keto-4-pentenoate hydratase 1 (263 aa).

It belongs to the hydratase/decarboxylase family. MhpD subfamily. It depends on a divalent metal cation as a cofactor.

It catalyses the reaction (S)-4-hydroxy-2-oxopentanoate = (2Z)-2-hydroxypenta-2,4-dienoate + H2O. It participates in aromatic compound metabolism; 3-phenylpropanoate degradation. In terms of biological role, catalyzes the conversion of 2-hydroxypentadienoic acid (enolic form of 2-oxopent-4-enoate) to 4-hydroxy-2-ketopentanoic acid. This chain is 2-keto-4-pentenoate hydratase 1, found in Dechloromonas aromatica (strain RCB).